A 422-amino-acid chain; its full sequence is Protein phosphatase methylesterase 1 (422 aa).

The segment at 1-27 (MSDMFRKSVLNKLPHLPPTRAPWADES) is disordered. Active-site residues include serine 207, aspartate 234, and histidine 371.

Belongs to the AB hydrolase superfamily.

The catalysed reaction is [phosphatase 2A protein]-C-terminal L-leucine methyl ester + H2O = [phosphatase 2A protein]-C-terminal L-leucine + methanol + H(+). Functionally, demethylates proteins that have been reversibly carboxymethylated. Demethylates the phosphatase PP2A catalytic subunit. This Cryptococcus neoformans var. neoformans serotype D (strain JEC21 / ATCC MYA-565) (Filobasidiella neoformans) protein is Protein phosphatase methylesterase 1 (PPE1).